The primary structure comprises 87 residues: Large ribosomal subunit protein bL27 (87 aa).

Residues 1 to 11 (MASKASGGSTR) show a composition bias toward polar residues. The segment at 1 to 21 (MASKASGGSTRNGRDSNSKRL) is disordered.

Belongs to the bacterial ribosomal protein bL27 family.

The protein is Large ribosomal subunit protein bL27 of Hydrogenobaculum sp. (strain Y04AAS1).